The primary structure comprises 256 residues: tRNA pseudouridine synthase A (256 aa).

Catalysis depends on Asp55, which acts as the Nucleophile. Residue Tyr113 participates in substrate binding.

The protein belongs to the tRNA pseudouridine synthase TruA family. In terms of assembly, homodimer.

It carries out the reaction uridine(38/39/40) in tRNA = pseudouridine(38/39/40) in tRNA. Its function is as follows. Formation of pseudouridine at positions 38, 39 and 40 in the anticodon stem and loop of transfer RNAs. The sequence is that of tRNA pseudouridine synthase A from Limosilactobacillus reuteri (strain DSM 20016) (Lactobacillus reuteri).